A 416-amino-acid chain; its full sequence is Alpha-1,3/1,6-mannosyltransferase ALG2 (416 aa).

At 1-84 the chain is on the cytoplasmic side; the sequence is MAEEQGRERD…LPRGLGWGGR (84 aa). Positions 85–105 form an intramembrane region, helical; it reads GAAVCAYVRMVFLALYVLFLA. Over 106 to 416 the chain is Cytoplasmic; it reads DEEFDVVVCD…LYRYVTKLLV (311 aa).

Belongs to the glycosyltransferase group 1 family. Glycosyltransferase 4 subfamily.

The protein resides in the endoplasmic reticulum membrane. It carries out the reaction a beta-D-Man-(1-&gt;4)-beta-D-GlcNAc-(1-&gt;4)-alpha-D-GlcNAc-diphospho-di-trans,poly-cis-dolichol + GDP-alpha-D-mannose = an alpha-D-Man-(1-&gt;3)-beta-D-Man-(1-&gt;4)-beta-D-GlcNAc-(1-&gt;4)-alpha-D-GlcNAc-diphospho-di-trans,poly-cis-dolichol + GDP + H(+). The enzyme catalyses an alpha-D-Man-(1-&gt;3)-beta-D-Man-(1-&gt;4)-beta-D-GlcNAc-(1-&gt;4)-alpha-D-GlcNAc-diphospho-di-trans,poly-cis-dolichol + GDP-alpha-D-mannose = an alpha-D-Man-(1-&gt;3)-[alpha-D-Man-(1-&gt;6)]-beta-D-Man-(1-&gt;4)-beta-D-GlcNAc-(1-&gt;4)-alpha-D-GlcNAc-diphospho-di-trans,poly-cis-dolichol + GDP + H(+). The catalysed reaction is a beta-D-Man-(1-&gt;4)-beta-D-GlcNAc-(1-&gt;4)-alpha-D-GlcNAc-diphospho-di-trans,poly-cis-dolichol + GDP-alpha-D-mannose = an alpha-D-Man-(1-&gt;6)-beta-D-Man-(1-&gt;4)-beta-D-GlcNAc-(1-&gt;4)-alpha-D-GlcNAc-diphospho-di-trans,poly-cis-dolichol + GDP + H(+). It catalyses the reaction an alpha-D-Man-(1-&gt;6)-beta-D-Man-(1-&gt;4)-beta-D-GlcNAc-(1-&gt;4)-alpha-D-GlcNAc-diphospho-di-trans,poly-cis-dolichol + GDP-alpha-D-mannose = an alpha-D-Man-(1-&gt;3)-[alpha-D-Man-(1-&gt;6)]-beta-D-Man-(1-&gt;4)-beta-D-GlcNAc-(1-&gt;4)-alpha-D-GlcNAc-diphospho-di-trans,poly-cis-dolichol + GDP + H(+). It functions in the pathway protein modification; protein glycosylation. Mannosyltransferase that operates in the biosynthetic pathway of dolichol-linked oligosaccharides, the glycan precursors employed in protein asparagine (N)-glycosylation. The assembly of dolichol-linked oligosaccharides begins on the cytosolic side of the endoplasmic reticulum membrane and finishes in its lumen. The sequential addition of sugars to dolichol pyrophosphate produces dolichol-linked oligosaccharides containing fourteen sugars, including two GlcNAcs, nine mannoses and three glucoses. Once assembled, the oligosaccharide is transferred from the lipid to nascent proteins by oligosaccharyltransferases. Catalyzes, on the cytoplasmic face of the endoplasmic reticulum, the addition of the second and third mannose residues to the dolichol-linked oligosaccharide chain, to produce Man3GlcNAc(2)-PP-dolichol core oligosaccharide. Man3GlcNAc(2)-PP-dolichol is a substrate for ALG11, the following enzyme in the biosynthetic pathway. While both alpha 1,3 and alpha 1,6 linkages are possible, the sequential addition of alpha 1,3 followed by alpha 1,6 is probably the preferred route. The sequence is that of Alpha-1,3/1,6-mannosyltransferase ALG2 (ALG2) from Homo sapiens (Human).